A 261-amino-acid polypeptide reads, in one-letter code: Mite allergen Eur m 3 (261 aa).

An N-terminal signal peptide occupies residues 1 to 18 (MVICNAIIVLLLAFNTLA). A propeptide spanning residues 19 to 29 (NPILPSSPNAT) is cleaved from the precursor. A Peptidase S1 domain is found at 30-260 (IVGGQKAKAG…FIDWIDSKRS (231 aa)). A disulfide bridge links C54 with C70. Active-site charge relay system residues include H69 and D114. 2 disulfide bridges follow: C181–C198 and C210–C236. S214 serves as the catalytic Charge relay system.

The protein belongs to the peptidase S1 family.

It is found in the secreted. The polypeptide is Mite allergen Eur m 3 (EURM3) (Euroglyphus maynei (Mayne's house dust mite)).